The chain runs to 176 residues: Protein GrpE (176 aa).

Belongs to the GrpE family. As to quaternary structure, homodimer.

Its subcellular location is the cytoplasm. In terms of biological role, participates actively in the response to hyperosmotic and heat shock by preventing the aggregation of stress-denatured proteins, in association with DnaK and GrpE. It is the nucleotide exchange factor for DnaK and may function as a thermosensor. Unfolded proteins bind initially to DnaJ; upon interaction with the DnaJ-bound protein, DnaK hydrolyzes its bound ATP, resulting in the formation of a stable complex. GrpE releases ADP from DnaK; ATP binding to DnaK triggers the release of the substrate protein, thus completing the reaction cycle. Several rounds of ATP-dependent interactions between DnaJ, DnaK and GrpE are required for fully efficient folding. The protein is Protein GrpE of Thermoplasma volcanium (strain ATCC 51530 / DSM 4299 / JCM 9571 / NBRC 15438 / GSS1).